The primary structure comprises 372 residues: GDP-mannose transporter GONST3 (372 aa).

Transmembrane regions (helical) follow at residues 33–53, 60–80, 92–112, 125–145, 155–175, 177–197, 209–229, 251–271, 280–300, and 303–323; these read ASVY…SIIN, FPYP…GVLL, LNLL…LSLF, TFIV…TLFL, WGSL…DYQF, IAAY…FVYI, WGLV…ELLI, VVLP…FGFS, GFTV…LMVW, and HSTF…VMYQ. The interval 331–372 is disordered; that stretch reads NATQEAKPQEQDEEQEKLLEMQENKESNSVDIKETLKSEEKL. Basic and acidic residues predominate over residues 346-372; it reads EKLLEMQENKESNSVDIKETLKSEEKL.

Belongs to the nucleotide-sugar transporter family. GDP-Mannose:GMP antiporter (GMA) (TC 2.A.7.13) subfamily. Expressed in rosette leaves, stems, flowers and siliques.

Its subcellular location is the golgi apparatus membrane. In terms of biological role, GDP-mannose transporter that may be involved in the import of GDP-mannose from the cytoplasm into the Golgi lumen. The polypeptide is GDP-mannose transporter GONST3 (Arabidopsis thaliana (Mouse-ear cress)).